We begin with the raw amino-acid sequence, 386 residues long: 5-hydroxytryptamine receptor 1B (386 aa).

The Extracellular segment spans residues 1–42 (MEEQGIQCAPPPPAASQTGVPLVNLSHNCSAESHIYQDSIAL). Asparagine 24 and asparagine 28 each carry an N-linked (GlcNAc...) asparagine glycan. A helical membrane pass occupies residues 43–68 (PWKVLLVALLALITLATTLSNAFVIA). Over 69–82 (TVYRTRKLHTPANY) the chain is Cytoplasmic. The helical transmembrane segment at 83-107 (LIASLAVTDLLVSILVMPVSTMYTV) threads the bilayer. The Extracellular segment spans residues 108–115 (TGRWTLGQ). The helical transmembrane segment at 116–141 (VVCDFWLSSDITCCTASIMHLCVIAL) threads the bilayer. Cysteine 118 and cysteine 195 are joined by a disulfide. Positions 125 and 130 each coordinate ergotamine. Residues 142 to 144 (DRY) carry the DRY motif; important for ligand-induced conformation changes and signaling motif. Over 142–161 (DRYWAITDAVEYAAKRTPKR) the chain is Cytoplasmic. Residues 162–180 (AAIMIALVWVFSISISLPP) traverse the membrane as a helical segment. Over 181–201 (FFWRQAKAEEEVLTCLVNTDH) the chain is Extracellular. Valine 197 provides a ligand contact to ergotamine. The chain crosses the membrane as a helical span at residues 202–225 (VLYTVYSTGGAFYLPTLLLIALYG). The Cytoplasmic portion of the chain corresponds to 226–311 (RIYVEARSRI…AARERKATKT (86 aa)). Residues 255 to 268 (DSPGSTTSVTSINS) are compositionally biased toward polar residues. The disordered stretch occupies residues 255 to 278 (DSPGSTTSVTSINSRAPDLPSESG). The helical transmembrane segment at 312 to 333 (LGIILGAFIVCWLPFFIISLVM) threads the bilayer. The Extracellular portion of the chain corresponds to 334 to 343 (PICKDACWFH). A helical transmembrane segment spans residues 344–366 (MATLDFFNWLGYLNSLINPIIYT). Positions 361–365 (NPIIY) match the NPxxY motif; important for ligand-induced conformation changes and signaling motif. At 367-386 (MSNEDFKQAFHKLIRFKCAG) the chain is on the cytoplasmic side. The S-palmitoyl cysteine moiety is linked to residue cysteine 384.

It belongs to the G-protein coupled receptor 1 family. In terms of assembly, homodimer. Heterodimer with HTR1D. In terms of processing, phosphorylated. Desensitization of the receptor may be mediated by its phosphorylation. Palmitoylated.

It is found in the cell membrane. G-protein coupled receptor for 5-hydroxytryptamine (serotonin). Also functions as a receptor for ergot alkaloid derivatives, various anxiolytic and antidepressant drugs and other psychoactive substances, such as lysergic acid diethylamide (LSD). Ligand binding causes a conformation change that triggers signaling via guanine nucleotide-binding proteins (G proteins) and modulates the activity of downstream effectors, such as adenylate cyclase. HTR1B is coupled to G(i)/G(o) G alpha proteins and mediates inhibitory neurotransmission by inhibiting adenylate cyclase activity. Arrestin family members inhibit signaling via G proteins and mediate activation of alternative signaling pathways. Regulates the release of 5-hydroxytryptamine, dopamine and acetylcholine in the brain, and thereby affects neural activity, nociceptive processing, pain perception, mood and behavior. Besides, plays a role in vasoconstriction of cerebral arteries. This chain is 5-hydroxytryptamine receptor 1B (HTR1B), found in Cricetulus griseus (Chinese hamster).